A 134-amino-acid chain; its full sequence is Late embryogenesis abundant protein 6 (134 aa).

A compositionally biased stretch (basic and acidic residues) spans 31 to 45; it reads ERAMARTKEEKEIAH. 2 disordered regions span residues 31 to 53 and 80 to 134; these read ERAM…AKEA and VTDH…HHHY. Residues 34 to 70 are a coiled coil; it reads MARTKEEKEIAHQRRKAKEAEANMDMHMAKAAHAEDK. A compositionally biased stretch (low complexity) spans 115 to 127; sequence PPQTYHPTYPPTG.

The protein belongs to the LEA type 1 family.

Functionally, involved dehydration tolerance. Involved in the adaptive response of vascular plants to withstand water deficit. May possess chaperone-like activity under water deficit. In Arabidopsis thaliana (Mouse-ear cress), this protein is Late embryogenesis abundant protein 6.